We begin with the raw amino-acid sequence, 335 residues long: Ribosomal RNA large subunit methyltransferase F (335 aa).

Belongs to the methyltransferase superfamily. METTL16/RlmF family.

Its subcellular location is the cytoplasm. The catalysed reaction is adenosine(1618) in 23S rRNA + S-adenosyl-L-methionine = N(6)-methyladenosine(1618) in 23S rRNA + S-adenosyl-L-homocysteine + H(+). Its function is as follows. Specifically methylates the adenine in position 1618 of 23S rRNA. In Yersinia enterocolitica serotype O:8 / biotype 1B (strain NCTC 13174 / 8081), this protein is Ribosomal RNA large subunit methyltransferase F.